The primary structure comprises 261 residues: Oxidoreductase ptaF (261 aa).

Belongs to the avfA family.

It participates in secondary metabolite biosynthesis. Functionally, oxidoreductase; part of the gene cluster that mediates the biosynthesis of pestheic acid, a diphenyl ether which is a biosynthetic precursor of the unique chloropupukeananes. The biosynthesis initiates from condensation of acetate and malonate units catalyzed by the non-reducing PKS ptaA. As the ptaA protein is TE/CLC domain-deficient, hydrolysis and Claisen cyclization of the polyketide could be catalyzed by ptaB containing a beta-lactamase domain. The ptaB protein might hydrolyze the thioester bond between the ACP of ptaA and the intermediate to release atrochrysone carboxylic acid, which is spontaneously dehydrated to form endocrocin anthrone. Endocrocin anthrone is then converted to endocrocin, catalyzed by the anthrone oxygenase ptaC. Spontaneous decarboxylation of endocrocin occurs to generate emodin. An O-methyltransferase (ptaH or ptaI) could methylate emodin to form physcion. PtaJ could then catalyze the oxidative cleavage of physcion, and rotation of the intermediate could then afford desmethylisosulochrin. PtaF, a putative NADH-dependent oxidoreductase, might also participate in the oxidative cleavage step. Desmethylisosulochrin is then transformed by another O-methyltransferase (ptaH or ptaI) to form isosulochrin. Chlorination of isosulochrin by ptaM in the cyclohexadienone B ring then produces chloroisosulochrin. PtaE is responsible for the oxidative coupling reactions of both benzophenones isosulouchrin and chloroisosulochrin to RES-1214-1 and pestheic acid respectively, regardless of chlorination. This Pestalotiopsis fici (strain W106-1 / CGMCC3.15140) protein is Oxidoreductase ptaF.